The chain runs to 557 residues: Glucose-6-phosphate isomerase (557 aa).

Glu361 functions as the Proton donor in the catalytic mechanism. Active-site residues include His392 and Lys520.

This sequence belongs to the GPI family.

It localises to the cytoplasm. The enzyme catalyses alpha-D-glucose 6-phosphate = beta-D-fructose 6-phosphate. It functions in the pathway carbohydrate biosynthesis; gluconeogenesis. It participates in carbohydrate degradation; glycolysis; D-glyceraldehyde 3-phosphate and glycerone phosphate from D-glucose: step 2/4. Its function is as follows. Catalyzes the reversible isomerization of glucose-6-phosphate to fructose-6-phosphate. The sequence is that of Glucose-6-phosphate isomerase from Acinetobacter venetianus (strain ATCC 31012 / DSM 23050 / BCRC 14357 / CCUG 45561 / CIP 110063 / KCTC 2702 / LMG 19082 / RAG-1).